A 148-amino-acid polypeptide reads, in one-letter code: Deoxyuridine 5'-triphosphate nucleotidohydrolase (148 aa).

Substrate contacts are provided by residues Arg68–Gly70, Asn81, Thr85–Asp87, and Lys95.

The protein belongs to the dUTPase family. The cofactor is Mg(2+).

The catalysed reaction is dUTP + H2O = dUMP + diphosphate + H(+). The protein operates within pyrimidine metabolism; dUMP biosynthesis; dUMP from dCTP (dUTP route): step 2/2. In terms of biological role, this enzyme is involved in nucleotide metabolism: it produces dUMP, the immediate precursor of thymidine nucleotides and it decreases the intracellular concentration of dUTP so that uracil cannot be incorporated into DNA. The sequence is that of Deoxyuridine 5'-triphosphate nucleotidohydrolase from Rickettsia typhi (strain ATCC VR-144 / Wilmington).